We begin with the raw amino-acid sequence, 240 residues long: Hairy and enhancer of split-related protein HELT (240 aa).

A bHLH domain is found at Arg10–Leu65. Lys48 is subject to N6-acetyllysine. The 36-residue stretch at Phe86–Leu121 folds into the Orange domain.

It belongs to the HEY family. In terms of assembly, self-associates. Interacts with HES5 and HEY2. Expressed in heart and testis.

It localises to the nucleus. Its function is as follows. Transcriptional repressor which binds preferentially to the canonical E box sequence 5'-CACGCG-3'. Required for the development of GABAergic neurons. The protein is Hairy and enhancer of split-related protein HELT (Helt) of Mus musculus (Mouse).